The following is a 140-amino-acid chain: Nucleoside diphosphate kinase (140 aa).

6 residues coordinate ATP: K11, F59, R87, T93, R104, and N114. H117 functions as the Pros-phosphohistidine intermediate in the catalytic mechanism.

Belongs to the NDK family. As to quaternary structure, homotetramer. Mg(2+) is required as a cofactor.

The protein localises to the cytoplasm. The catalysed reaction is a 2'-deoxyribonucleoside 5'-diphosphate + ATP = a 2'-deoxyribonucleoside 5'-triphosphate + ADP. It catalyses the reaction a ribonucleoside 5'-diphosphate + ATP = a ribonucleoside 5'-triphosphate + ADP. Major role in the synthesis of nucleoside triphosphates other than ATP. The ATP gamma phosphate is transferred to the NDP beta phosphate via a ping-pong mechanism, using a phosphorylated active-site intermediate. This Rhodopseudomonas palustris (strain BisA53) protein is Nucleoside diphosphate kinase.